An 838-amino-acid chain; its full sequence is DNA gyrase subunit A (838 aa).

Residues 41–510 form the Topo IIA-type catalytic domain; it reads LPEVRDGLKP…ADGDVSDEDL (470 aa). Residue Y129 is the O-(5'-phospho-DNA)-tyrosine intermediate of the active site. Residues 537–543 carry the GyrA-box motif; it reads QKRGGKG.

It belongs to the type II topoisomerase GyrA/ParC subunit family. In terms of assembly, heterotetramer, composed of two GyrA and two GyrB chains. In the heterotetramer, GyrA contains the active site tyrosine that forms a transient covalent intermediate with DNA, while GyrB binds cofactors and catalyzes ATP hydrolysis.

The protein localises to the cytoplasm. It catalyses the reaction ATP-dependent breakage, passage and rejoining of double-stranded DNA.. A type II topoisomerase that negatively supercoils closed circular double-stranded (ds) DNA in an ATP-dependent manner to modulate DNA topology and maintain chromosomes in an underwound state. Negative supercoiling favors strand separation, and DNA replication, transcription, recombination and repair, all of which involve strand separation. Also able to catalyze the interconversion of other topological isomers of dsDNA rings, including catenanes and knotted rings. Type II topoisomerases break and join 2 DNA strands simultaneously in an ATP-dependent manner. The chain is DNA gyrase subunit A from Mycobacterium tuberculosis (strain CDC 1551 / Oshkosh).